We begin with the raw amino-acid sequence, 657 residues long: MSVDSSSSSTHRRRCVAARLVRLAAAGAAVTVAVGTAAAWAHAGALQHRCIHDAMQARVRQSVARHHTAPGAVSAVGLPYVTLDAAHTAAAADPRPGSAPTVVRAANWSTLRVAVSTEDLTDPAYHCARVGQRVNNHAGAIVTCTAEDILTDEKRDILRKYLIPQALQLHTERLKARQVQGKWKVTGMVDEICGDFKVPQAHITEGFSNTDFVMYVASVPSEEGVLAWATTCQVFSDGHPAVGVINIPAANIASRYDQLVTRVVTHEMAHALGFSEEFFTAARIVAHVSNVRHKTLKVPVVNSSTAVAKAREQYGCGTLEYLEIEDQGGAGSAGSHIKMRNAQDELMAPAAAGGYYTALTMAVFQDLGFYQADFNKAKVMPWGRNAGCAFLSEKCMEQNITKWRAMFCNESEDVMRCPTSRLSLGTCGIRGYRPPLPRYWQYFTNASLGGYSPFMDYCPVVIGYANGSCNQDASSAAEFLAAFNVFSEAARCIDGAFTPKNRTAADGYYAGLCANVRCDTATRTYSVQVRGSMDYVSCTPGLRVELSTVSNAFEEGGCITCPPYVEVCQGNVKGAKDFAGDSDSSSSADDAAGKAAMLRWNDRMVGLATAATVLLGMVLSLMALVVVWLLLVSCPWWCCKLGGPPASVTPACSPETE.

A signal peptide spans 1-41 (MSVDSSSSSTHRRRCVAARLVRLAAAGAAVTVAVGTAAAWA). A propeptide spans 42 to 102 (HAGALQHRCI…DPRPGSAPTV (61 aa)) (activation peptide). Residues 44–611 (GALQHRCIHD…DRMVGLATAA (568 aa)) lie on the Extracellular side of the membrane. The N-linked (GlcNAc...) asparagine glycan is linked to N107. 2 disulfide bridges follow: C127/C144 and C193/C232. H266 serves as a coordination point for Zn(2+). E267 is an active-site residue. H270 contacts Zn(2+). Residue N302 is glycosylated (N-linked (GlcNAc...) asparagine). 7 cysteine pairs are disulfide-bonded: C316–C388, C395–C458, C408–C427, C417–C492, C469–C513, C518–C568, and C538–C561. Residue H336 coordinates Zn(2+). Residues N399, N409, N445, N466, and N501 are each glycosylated (N-linked (GlcNAc...) asparagine). The helical transmembrane segment at 612–632 (TVLLGMVLSLMALVVVWLLLV) threads the bilayer. Over 633 to 657 (SCPWWCCKLGGPPASVTPACSPETE) the chain is Cytoplasmic.

This sequence belongs to the peptidase M8 family. The cofactor is Zn(2+).

The protein resides in the membrane. The enzyme catalyses Preference for hydrophobic residues at P1 and P1' and basic residues at P2' and P3'. A model nonapeptide is cleaved at -Ala-Tyr-|-Leu-Lys-Lys-.. Functionally, has an integral role during the infection of macrophages in the mammalian host. The chain is Leishmanolysin (mspC) from Leishmania tropica.